Here is a 293-residue protein sequence, read N- to C-terminus: Ribosomal RNA small subunit methyltransferase H (293 aa).

S-adenosyl-L-methionine is bound by residues 34-36 (GGH), aspartate 54, leucine 86, aspartate 101, and glutamine 108.

Belongs to the methyltransferase superfamily. RsmH family.

The protein resides in the cytoplasm. It catalyses the reaction cytidine(1402) in 16S rRNA + S-adenosyl-L-methionine = N(4)-methylcytidine(1402) in 16S rRNA + S-adenosyl-L-homocysteine + H(+). Functionally, specifically methylates the N4 position of cytidine in position 1402 (C1402) of 16S rRNA. The protein is Ribosomal RNA small subunit methyltransferase H of Elusimicrobium minutum (strain Pei191).